The primary structure comprises 396 residues: G-protein coupled receptor 84 (396 aa).

Topologically, residues 1–26 (MWNASDVNFSCYHESVLGYRYVAVSW) are extracellular. Residues Asn3 and Asn8 are each glycosylated (N-linked (GlcNAc...) asparagine). The helical transmembrane segment at 27-47 (GIVVAVTGTVGNVLTLLALAI) threads the bilayer. Over 48–57 (QPKLRTRFNL) the chain is Cytoplasmic. The chain crosses the membrane as a helical span at residues 58–78 (LIANLTVADLLYCTLLQPFSV). Topologically, residues 79–94 (DTYLHLHWRTGATFCQ) are extracellular. The chain crosses the membrane as a helical span at residues 95–115 (IFGFLLFVSNSVSILTLCLIA). Topologically, residues 116–144 (LGRYLLIAHPKLFPQVFSAKGIVLALVST) are cytoplasmic. Residues 145-165 (WVVAVASFAPLWPIYILVPVV) traverse the membrane as a helical segment. The Extracellular segment spans residues 166–180 (CTCSFDRIRGQPYTT). The chain crosses the membrane as a helical span at residues 181–201 (ILMGIYFVVGLSSVGVFYCLI). Over 202–320 (HQQVKRAAQA…PSEFGKVTRM (119 aa)) the chain is Cytoplasmic. Residues Ser221 and Ser224 each carry the phosphoserine modification. Positions 243-310 (SGLASGGPSE…TKGAQRAQDS (68 aa)) are disordered. Thr263 and Thr264 each carry phosphothreonine. Residues 321–341 (CFAVFLCFTLSYIPFLLLNIL) traverse the membrane as a helical segment. The Extracellular portion of the chain corresponds to 342–352 (DAKVQAPRVVH). The chain crosses the membrane as a helical span at residues 353–373 (MLAANLTWLNGCINPVLYAAM). At 374-396 (NRQFRQAYGSLLRRGPQSFHRFH) the chain is on the cytoplasmic side.

It belongs to the G-protein coupled receptor 1 family. Interacts with ARRB2 and ARR3. In terms of processing, phosphorylated by a subset of GPR84-activating ligands. Constitutively phosphorylated at Ser-221 and Ser-224 in the absence of 2-HTP. By contrast, Thr-263 and Thr-264 are phosphorylated only following prior cell treatment with 2-HTP.

It localises to the cell membrane. G protein-coupled receptor that responds endogenously to dietary fatty acids or nutrient, specifically medium-chain free fatty acid (FFA) with carbon chain lengths of C9 to C14. Capric acid (C10:0), undecanoic acid (C11:0) and lauric acid (C12:0) are the most potent agonists. In immune cells, functions as a pro-inflammatory receptor via 6-OAU and promotes the expression of pro-inflammatory mediators such as TNFalpha, IL-6 and IL-12B as well as stimulating chemotactic responses through activation of signaling mediators AKT, ERK and NF-kappa-B. In addition, triggers increased bacterial adhesion and phagocytosis in macrophages and regulates pro-inflammatory function via enhancing NLRP3 inflammasome activation. Also plays an important role in inflammation by modulating neutrophil functions. Mechanistically, promotes neutrophil chemotaxis, reactive oxygen species (ROS) production and degranulation via LYN-AKT/ERK pathway. To regulate ROS, communicates with the two formyl peptide receptors FPR2 and FPR1 to control the NADPH oxidase activity in neutrophils. This is G-protein coupled receptor 84 (GPR84) from Bos taurus (Bovine).